The primary structure comprises 117 residues: Small ribosomal subunit protein bS6 (117 aa).

The protein belongs to the bacterial ribosomal protein bS6 family.

In terms of biological role, binds together with bS18 to 16S ribosomal RNA. The sequence is that of Small ribosomal subunit protein bS6 from Porphyromonas gingivalis (strain ATCC BAA-308 / W83).